Here is a 611-residue protein sequence, read N- to C-terminus: ATP-dependent zinc metalloprotease FtsH (611 aa).

Met-1 is a topological domain (cytoplasmic). A helical transmembrane segment spans residues 2 to 22; the sequence is VKNLIFWLVITVVLMSIFQNF. Residues 23-98 are Extracellular-facing; sequence NTNDVNNHKV…IGAIPEEPSL (76 aa). A helical transmembrane segment spans residues 99–119; the sequence is FISILISWFPMLLLIGVWIFF. At 120–611 the chain is on the cytoplasmic side; the sequence is MRQMQMGGGK…KGWIETDTNK (492 aa). 192 to 199 serves as a coordination point for ATP; that stretch reads GPPGTGKT. His-414 provides a ligand contact to Zn(2+). Glu-415 is an active-site residue. His-418 and Asp-492 together coordinate Zn(2+).

In the central section; belongs to the AAA ATPase family. The protein in the C-terminal section; belongs to the peptidase M41 family. Homohexamer. Zn(2+) is required as a cofactor.

It localises to the cell membrane. In terms of biological role, acts as a processive, ATP-dependent zinc metallopeptidase for both cytoplasmic and membrane proteins. Plays a role in the quality control of integral membrane proteins. The protein is ATP-dependent zinc metalloprotease FtsH of Buchnera aphidicola subsp. Acyrthosiphon pisum (strain APS) (Acyrthosiphon pisum symbiotic bacterium).